Here is a 182-residue protein sequence, read N- to C-terminus: Avenin-E (182 aa).

The stretch at proline 21–glutamine 26 is one 1; approximate repeat. Positions proline 21–glutamine 41 are 3 X 7 AA tandem repeats of P-F-V-Q-Q-Q-Q. A 2; approximate repeat occupies proline 27–glutamine 34. Residues proline 35–glutamine 41 form repeat 3.

It belongs to the gliadin/glutenin family. Monomer.

Its subcellular location is the vacuole. It is found in the aleurone grain. Functionally, seed storage protein. Serves as a source of nitrogen, carbon, and sulfur for the young developing seedling. The protein is Avenin-E of Avena sativa (Oat).